Consider the following 245-residue polypeptide: tRNA pseudouridine synthase A (245 aa).

Aspartate 52 (nucleophile) is an active-site residue. Position 111 (tyrosine 111) interacts with substrate.

This sequence belongs to the tRNA pseudouridine synthase TruA family. As to quaternary structure, homodimer.

The enzyme catalyses uridine(38/39/40) in tRNA = pseudouridine(38/39/40) in tRNA. Functionally, formation of pseudouridine at positions 38, 39 and 40 in the anticodon stem and loop of transfer RNAs. In Thermotoga neapolitana (strain ATCC 49049 / DSM 4359 / NBRC 107923 / NS-E), this protein is tRNA pseudouridine synthase A.